A 238-amino-acid polypeptide reads, in one-letter code: NADH-quinone oxidoreductase subunit C (238 aa).

Polar residues predominate over residues 1 to 11 (MSTSNGSANGT). The interval 1-20 (MSTSNGSANGTNGVGLPRGD) is disordered.

Belongs to the complex I 30 kDa subunit family. As to quaternary structure, NDH-1 is composed of 14 different subunits. Subunits NuoB, C, D, E, F, and G constitute the peripheral sector of the complex.

The protein localises to the cell membrane. It catalyses the reaction a quinone + NADH + 5 H(+)(in) = a quinol + NAD(+) + 4 H(+)(out). NDH-1 shuttles electrons from NADH, via FMN and iron-sulfur (Fe-S) centers, to quinones in the respiratory chain. The immediate electron acceptor for the enzyme in this species is believed to be a menaquinone. Couples the redox reaction to proton translocation (for every two electrons transferred, four hydrogen ions are translocated across the cytoplasmic membrane), and thus conserves the redox energy in a proton gradient. The polypeptide is NADH-quinone oxidoreductase subunit C (Mycolicibacterium smegmatis (strain ATCC 700084 / mc(2)155) (Mycobacterium smegmatis)).